Reading from the N-terminus, the 540-residue chain is T-complex protein 1 subunit alpha (540 aa).

It belongs to the TCP-1 chaperonin family. In terms of assembly, component of the T-complex protein 1 (TCP1) complex.

Its subcellular location is the cytoplasm. In terms of biological role, molecular chaperone; assists the folding of proteins upon ATP hydrolysis. In Encephalitozoon cuniculi (strain GB-M1) (Microsporidian parasite), this protein is T-complex protein 1 subunit alpha (TCP1).